Here is an 88-residue protein sequence, read N- to C-terminus: LYR motif-containing protein 2 (88 aa).

Residues 1–19 (MATSRLPPATLTLKQFMRR) constitute a mitochondrion transit peptide.

The protein belongs to the complex I LYR family.

Its subcellular location is the mitochondrion. Its function is as follows. Involved in efficient integration of the N-module into mitochondrial respiratory chain complex I. The sequence is that of LYR motif-containing protein 2 (LYRM2) from Bos taurus (Bovine).